We begin with the raw amino-acid sequence, 58 residues long: SPbeta prophage-derived uncharacterized protein YotN (58 aa).

This is SPbeta prophage-derived uncharacterized protein YotN (yotN) from Bacillus subtilis (strain 168).